The following is a 204-amino-acid chain: CASP-like protein 2U1 (204 aa).

Residues 1–36 (MGVLGGDAHVPIGSQVSPGSVVVTNNESFGHRKLLK) lie on the Cytoplasmic side of the membrane. The helical transmembrane segment at 37 to 57 (GVDFLVRIKAFAFCLAVIVLL) threads the bilayer. At 58 to 84 (KNNVQTTVIAPGIVLQAKYNNTKAPVS) the chain is on the extracellular side. N-linked (GlcNAc...) asparagine glycosylation occurs at N77. The chain crosses the membrane as a helical span at residues 85–105 (LLVLASICCGYAFLQAVVSLL). The Cytoplasmic segment spans residues 106–117 (SFIRDKRVLNNT). Residues 118–138 (VLAWLTFLLDQVLTYLLLGSA) form a helical membrane-spanning segment. Residues 139–170 (AATAEAAYIAKRGEDKVQWKAVCGPFKRFCDH) are Extracellular-facing. A helical membrane pass occupies residues 171 to 191 (FAATVFLSFIAVIAFAVSAAI). At 192 to 204 (SAYYLFRRSKGFK) the chain is on the cytoplasmic side.

The protein belongs to the Casparian strip membrane proteins (CASP) family. Homodimer and heterodimers.

It localises to the cell membrane. This is CASP-like protein 2U1 from Selaginella moellendorffii (Spikemoss).